Reading from the N-terminus, the 227-residue chain is 2,3-bisphosphoglycerate-dependent phosphoglycerate mutase (227 aa).

Residues 7–14 (RHGQSEWN), 20–21 (TG), arginine 59, 86–89 (ERHY), lysine 97, 113–114 (RR), and 182–183 (GN) contribute to the substrate site. Residue histidine 8 is the Tele-phosphohistidine intermediate of the active site. Catalysis depends on glutamate 86, which acts as the Proton donor/acceptor.

The protein belongs to the phosphoglycerate mutase family. BPG-dependent PGAM subfamily. As to quaternary structure, homodimer.

The catalysed reaction is (2R)-2-phosphoglycerate = (2R)-3-phosphoglycerate. It participates in carbohydrate degradation; glycolysis; pyruvate from D-glyceraldehyde 3-phosphate: step 3/5. Catalyzes the interconversion of 2-phosphoglycerate and 3-phosphoglycerate. The polypeptide is 2,3-bisphosphoglycerate-dependent phosphoglycerate mutase (Neisseria meningitidis serogroup C (strain 053442)).